Reading from the N-terminus, the 553-residue chain is MARESRESTTLDSHSAEDQMELLVIKVEQEESSPLAEETSWLGSPGPDRSRQRFRAFRYPEAAGPRQALSRLRELCRQWLRPDMHSKEQILELLVLEQFLTILPGELQAWVREQHPDSGEEVVALLEYLDRQLDDTPPQVPDDDDGQELLCSKAVLLTSAQGSESSQMEPVEPLLKQESLGSLPSEVRVTHVGHCGEDGVTATRLTSELQGLLKMEDVAPVLSPRWTEQDSSQMNLYKDGMQEHSGSLVSLDQDMQTKVRDLPRAEEYRDQKPEQTVCFLGEDTVPIPTGAEASEQEGKLQAAQKSATGTRRFYCRECGKSFAQSSGLSKHKRIHTGLKPYECEECGKAFIGSSALIIHQRVHTGEKPYECEECGKAFSHSSDLIKHQRTHTGEKPYECDDCGKTFTQSCSLLEHHRIHTGEKPYQCNMCPKAFRRSSHLLRHQRTHTGDKDFFVPEPYWESQSRVESHWENIETPVSYQCNDCERSFSRITSLIEHQKVHTGEKPFECQTCGKGFTRPSYLIQHQRRHTGKKTSVTVTPAVHSEVGVQLSLN.

The interval Glu-28–Arg-49 is disordered. Ser-33 and Ser-44 each carry phosphoserine. Residues Arg-51 to Leu-133 enclose the SCAN box domain. Residue Thr-136 is modified to Phosphothreonine. Lys-176 is covalently cross-linked (Glycyl lysine isopeptide (Lys-Gly) (interchain with G-Cter in SUMO2)). The residue at position 206 (Thr-206) is a Phosphothreonine. In terms of domain architecture, KRAB spans Leu-213 to Pro-273. Position 223 is a phosphoserine (Ser-223). 5 consecutive C2H2-type zinc fingers follow at residues Phe-313 to His-335, Tyr-341 to His-363, Tyr-369 to His-391, Tyr-397 to His-419, and Tyr-425 to His-447. Thr-448 bears the Phosphothreonine mark. 2 consecutive C2H2-type zinc fingers follow at residues Tyr-479–His-501 and Phe-507–His-529.

This sequence belongs to the krueppel C2H2-type zinc-finger protein family. In terms of tissue distribution, expressed in heart, brain, spleen, lung, liver, skeletal muscle, kidney and testis.

The protein resides in the nucleus. It localises to the cytoplasm. Its function is as follows. Transcriptional factor that binds to the consensus sequence 5'-[GT][AG][AGT]GGGG-3' and acts as a repressor of autophagy. Specifically represses expression of genes involved in autophagy and lysosome biogenesis/function such as MAP1LC3B, ULK1 or WIPI2. Associates with chromatin at the ITGB4 and VEGF promoters. The polypeptide is Zinc finger protein with KRAB and SCAN domains 3 (Zkscan3) (Mus musculus (Mouse)).